A 253-amino-acid chain; its full sequence is Acidic endochitinase Q (253 aa).

The N-terminal stretch at 1–24 (MEFSGSPMALFCCVFFLFLTGSLA) is a signal peptide. Glu-92 serves as the catalytic Proton donor. A disulfide bridge connects residues Cys-212 and Cys-244.

The protein belongs to the glycosyl hydrolase 19 family. Chitinase class I subfamily.

The protein resides in the secreted. The enzyme catalyses Random endo-hydrolysis of N-acetyl-beta-D-glucosaminide (1-&gt;4)-beta-linkages in chitin and chitodextrins.. Its function is as follows. Defense against chitin-containing fungal pathogens. The protein is Acidic endochitinase Q of Nicotiana tabacum (Common tobacco).